The sequence spans 546 residues: Crossover junction endonuclease EME1A (546 aa).

Disordered regions lie at residues 1 to 55 (MSDF…FLDE) and 88 to 232 (VISL…REKQ). Over residues 28–49 (PTDLNLDTEPSLQKQPPGSAST) the composition is skewed to polar residues. Composition is skewed to basic and acidic residues over residues 103–120 (SSKKYEPVYTDSWKKPCR) and 149–167 (DAIEVDSDHEKEDTGVEKM). The segment covering 173 to 183 (TITSKSTSLSA) has biased composition (polar residues). Residues 188 to 245 (KKKMSKDEKTRAAEEKKLQKEQEKLQKAASKAEDAEHKKLEREKQKWAKEKDKALKCI) are a coiled coil. Residues 192–232 (SKDEKTRAAEEKKLQKEQEKLQKAASKAEDAEHKKLEREKQ) are compositionally biased toward basic and acidic residues. The ERCC4 domain maps to 278 to 478 (NPIQRSIVWT…PSLKSLLKVY (201 aa)).

This sequence belongs to the EME1/MMS4 family. As to quaternary structure, forms a heterodimer with MUS81. Mg(2+) is required as a cofactor. Requires Ca(2+) as cofactor.

It localises to the nucleus. Interacts with MUS81 to form a DNA structure-specific endonuclease with substrate preference for branched DNA structures with a 5'-end at the branch nick. Typical substrates include 3'-flap structures, D-loops, replication forks, nicked Holliday junctions and also intact Holliday junctions with a reduced efficiency. May be required in mitosis for the processing of stalled or collapsed replication fork intermediates. Plays a role in DNA repair and in genotoxic stress-induced homologous recombination (HR) in somatic cells. Mediates a subset of meiotic recombination events that are insensitive to crossover interference. This chain is Crossover junction endonuclease EME1A (EME1A), found in Arabidopsis thaliana (Mouse-ear cress).